Here is a 102-residue protein sequence, read N- to C-terminus: Small ribosomal subunit protein uS10 (102 aa).

The protein belongs to the universal ribosomal protein uS10 family. Part of the 30S ribosomal subunit.

Involved in the binding of tRNA to the ribosomes. The sequence is that of Small ribosomal subunit protein uS10 from Streptococcus thermophilus (strain CNRZ 1066).